The primary structure comprises 201 residues: Heat shock protein beta-1 (201 aa).

Ser15 is modified (phosphoserine; by PKA and PKC). Residues 83–193 (ALSRQMSSGM…SETTIPVNVE (111 aa)) form the sHSP domain.

This sequence belongs to the small heat shock protein (HSP20) family. As to quaternary structure, homooligomer. Homodimer; becomes monomeric upon activation. Heterooligomer.

The protein resides in the cytoplasm. It localises to the nucleus. It is found in the cytoskeleton. The protein localises to the spindle. Functionally, small heat shock protein which functions as a molecular chaperone probably maintaining denatured proteins in a folding-competent state. Plays a role in stress resistance and actin organization. The protein is Heat shock protein beta-1 (hspb1) of Poeciliopsis lucida (Desert topminnow).